The sequence spans 157 residues: SUMO-conjugating enzyme UBC9-B (157 aa).

The 154-residue stretch at Ile-4–Pro-157 folds into the UBC core domain. Residues Arg-13 to Lys-18 form an interaction with SUMO1 region. The active-site Glycyl thioester intermediate is Cys-93.

This sequence belongs to the ubiquitin-conjugating enzyme family. As to quaternary structure, forms a tight complex with rangap1 and ranbp2. Interacts with vsx1.

It localises to the nucleus. It participates in protein modification; protein sumoylation. Functionally, accepts the ubiquitin-like proteins sumo1, sumo2 and sumo3 from the uble1a-uble1b E1 complex and catalyzes their covalent attachment to other proteins with the help of an E3 ligase such as ranbp2 or cbx4. Essential for nuclear architecture and chromosome segregation. Mediates nuclear localization of vsx1. Required for progression through mitosis during organogenesis. The chain is SUMO-conjugating enzyme UBC9-B (ube2ib) from Danio rerio (Zebrafish).